Reading from the N-terminus, the 362-residue chain is Chalcone synthase A (362 aa).

C168 is an active-site residue.

It belongs to the thiolase-like superfamily. Chalcone/stilbene synthases family.

The catalysed reaction is (E)-4-coumaroyl-CoA + 3 malonyl-CoA + 3 H(+) = 2',4,4',6'-tetrahydroxychalcone + 3 CO2 + 4 CoA. It participates in secondary metabolite biosynthesis; flavonoid biosynthesis. In terms of biological role, the primary product of this enzyme is 4,2',4',6'-tetrahydroxychalcone (also termed naringenin-chalcone or chalcone) which can under specific conditions spontaneously isomerize into naringenin. The chain is Chalcone synthase A (CHSA) from Ipomoea trifida (Morning glory).